We begin with the raw amino-acid sequence, 436 residues long: 3-ketoacyl-CoA thiolase (436 aa).

The active-site Acyl-thioester intermediate is Cys-99. Active-site proton acceptor residues include His-392 and Cys-422.

Belongs to the thiolase-like superfamily. Thiolase family. As to quaternary structure, heterotetramer of two alpha chains (FadJ) and two beta chains (FadI).

It localises to the cytoplasm. It catalyses the reaction an acyl-CoA + acetyl-CoA = a 3-oxoacyl-CoA + CoA. Its pathway is lipid metabolism; fatty acid beta-oxidation. Catalyzes the final step of fatty acid oxidation in which acetyl-CoA is released and the CoA ester of a fatty acid two carbons shorter is formed. The sequence is that of 3-ketoacyl-CoA thiolase from Salmonella paratyphi A (strain AKU_12601).